The sequence spans 499 residues: L-arabinose isomerase (499 aa).

Mn(2+) is bound by residues Glu306, Glu333, His350, and His449.

Belongs to the arabinose isomerase family. Requires Mn(2+) as cofactor.

The enzyme catalyses beta-L-arabinopyranose = L-ribulose. The protein operates within carbohydrate degradation; L-arabinose degradation via L-ribulose; D-xylulose 5-phosphate from L-arabinose (bacterial route): step 1/3. In terms of biological role, catalyzes the conversion of L-arabinose to L-ribulose. This chain is L-arabinose isomerase, found in Aeromonas salmonicida (strain A449).